Reading from the N-terminus, the 515-residue chain is Maturase K (515 aa).

This sequence belongs to the intron maturase 2 family. MatK subfamily.

Its subcellular location is the plastid. The protein resides in the chloroplast. Usually encoded in the trnK tRNA gene intron. Probably assists in splicing its own and other chloroplast group II introns. In Pinus roxburghii (Chir pine), this protein is Maturase K.